Reading from the N-terminus, the 221-residue chain is Proline-rich protein 20A (221 aa).

2 disordered regions span residues 1–103 and 137–174; these read MEEP…QRQG and SLSETGPPPGTVQEGPGPDVAQPELGFQEPPAAPGPQA. A compositionally biased stretch (low complexity) spans 42 to 53; it reads PAQPAQPAKPIA. Positions 63–72 are enriched in pro residues; sequence PARPESPPPA. Positions 75-93 are enriched in basic residues; the sequence is GRRRGGSRRPGRGRGRRAG.

This sequence belongs to the PRR20 family.

This Homo sapiens (Human) protein is Proline-rich protein 20A (PRR20A).